A 381-amino-acid polypeptide reads, in one-letter code: Dual-specificity RNA methyltransferase RlmN (381 aa).

E96 acts as the Proton acceptor in catalysis. A Radical SAM core domain is found at 102–342 (TDDRGTLCVS…TRTTRGDDID (241 aa)). Residues C109 and C345 are joined by a disulfide bond. C116, C120, and C123 together coordinate [4Fe-4S] cluster. Residues 170–171 (GE), S202, 224–226 (SLH), and N302 each bind S-adenosyl-L-methionine. C345 acts as the S-methylcysteine intermediate in catalysis.

It belongs to the radical SAM superfamily. RlmN family. [4Fe-4S] cluster serves as cofactor.

It is found in the cytoplasm. It catalyses the reaction adenosine(2503) in 23S rRNA + 2 reduced [2Fe-2S]-[ferredoxin] + 2 S-adenosyl-L-methionine = 2-methyladenosine(2503) in 23S rRNA + 5'-deoxyadenosine + L-methionine + 2 oxidized [2Fe-2S]-[ferredoxin] + S-adenosyl-L-homocysteine. It carries out the reaction adenosine(37) in tRNA + 2 reduced [2Fe-2S]-[ferredoxin] + 2 S-adenosyl-L-methionine = 2-methyladenosine(37) in tRNA + 5'-deoxyadenosine + L-methionine + 2 oxidized [2Fe-2S]-[ferredoxin] + S-adenosyl-L-homocysteine. Its function is as follows. Specifically methylates position 2 of adenine 2503 in 23S rRNA and position 2 of adenine 37 in tRNAs. m2A2503 modification seems to play a crucial role in the proofreading step occurring at the peptidyl transferase center and thus would serve to optimize ribosomal fidelity. The polypeptide is Dual-specificity RNA methyltransferase RlmN (Pseudomonas putida (strain GB-1)).